The primary structure comprises 133 residues: Large ribosomal subunit protein bL20 (133 aa).

This sequence belongs to the bacterial ribosomal protein bL20 family.

Binds directly to 23S ribosomal RNA and is necessary for the in vitro assembly process of the 50S ribosomal subunit. It is not involved in the protein synthesizing functions of that subunit. This is Large ribosomal subunit protein bL20 from Rubrobacter xylanophilus (strain DSM 9941 / JCM 11954 / NBRC 16129 / PRD-1).